A 235-amino-acid chain; its full sequence is Ribonuclease PH (235 aa).

Residues R86 and 124-126 (GTR) contribute to the phosphate site.

The protein belongs to the RNase PH family. As to quaternary structure, homohexameric ring arranged as a trimer of dimers.

The catalysed reaction is tRNA(n+1) + phosphate = tRNA(n) + a ribonucleoside 5'-diphosphate. Phosphorolytic 3'-5' exoribonuclease that plays an important role in tRNA 3'-end maturation. Removes nucleotide residues following the 3'-CCA terminus of tRNAs; can also add nucleotides to the ends of RNA molecules by using nucleoside diphosphates as substrates, but this may not be physiologically important. Probably plays a role in initiation of 16S rRNA degradation (leading to ribosome degradation) during starvation. The chain is Ribonuclease PH from Francisella tularensis subsp. mediasiatica (strain FSC147).